Here is an 80-residue protein sequence, read N- to C-terminus: Exodeoxyribonuclease 7 small subunit (80 aa).

The protein belongs to the XseB family. In terms of assembly, heterooligomer composed of large and small subunits.

Its subcellular location is the cytoplasm. It carries out the reaction Exonucleolytic cleavage in either 5'- to 3'- or 3'- to 5'-direction to yield nucleoside 5'-phosphates.. Its function is as follows. Bidirectionally degrades single-stranded DNA into large acid-insoluble oligonucleotides, which are then degraded further into small acid-soluble oligonucleotides. The chain is Exodeoxyribonuclease 7 small subunit from Pseudomonas paraeruginosa (strain DSM 24068 / PA7) (Pseudomonas aeruginosa (strain PA7)).